Here is a 420-residue protein sequence, read N- to C-terminus: Tyrosine--tRNA ligase (420 aa).

Residue Tyr-36 coordinates L-tyrosine. Positions 41–50 (PTADSLHIGH) match the 'HIGH' region motif. 2 residues coordinate L-tyrosine: Tyr-170 and Gln-174. The 'KMSKS' region motif lies at 231 to 235 (KFGKS). Position 234 (Lys-234) interacts with ATP. The region spanning 353–420 (SNIIDVLIET…KKKYFMVNYK (68 aa)) is the S4 RNA-binding domain.

This sequence belongs to the class-I aminoacyl-tRNA synthetase family. TyrS type 1 subfamily. As to quaternary structure, homodimer.

It localises to the cytoplasm. It carries out the reaction tRNA(Tyr) + L-tyrosine + ATP = L-tyrosyl-tRNA(Tyr) + AMP + diphosphate + H(+). Its function is as follows. Catalyzes the attachment of tyrosine to tRNA(Tyr) in a two-step reaction: tyrosine is first activated by ATP to form Tyr-AMP and then transferred to the acceptor end of tRNA(Tyr). In Staphylococcus haemolyticus (strain JCSC1435), this protein is Tyrosine--tRNA ligase.